Reading from the N-terminus, the 343-residue chain is Anthranilate phosphoribosyltransferase (343 aa).

5-phospho-alpha-D-ribose 1-diphosphate contacts are provided by residues G86, 89-90, T94, 96-99, 114-122, and S126; these read GD, NIST, and KHGNKSASG. An anthranilate-binding site is contributed by G86. Residue S98 participates in Mg(2+) binding. N117 is an anthranilate binding site. An anthranilate-binding site is contributed by R172. Positions 231 and 232 each coordinate Mg(2+).

Belongs to the anthranilate phosphoribosyltransferase family. Homodimer. The cofactor is Mg(2+).

The catalysed reaction is N-(5-phospho-beta-D-ribosyl)anthranilate + diphosphate = 5-phospho-alpha-D-ribose 1-diphosphate + anthranilate. It participates in amino-acid biosynthesis; L-tryptophan biosynthesis; L-tryptophan from chorismate: step 2/5. In terms of biological role, catalyzes the transfer of the phosphoribosyl group of 5-phosphorylribose-1-pyrophosphate (PRPP) to anthranilate to yield N-(5'-phosphoribosyl)-anthranilate (PRA). The polypeptide is Anthranilate phosphoribosyltransferase (Prochlorococcus marinus subsp. pastoris (strain CCMP1986 / NIES-2087 / MED4)).